The primary structure comprises 106 residues: uncharacterized protein (106 aa).

This is an uncharacterized protein from Methanocaldococcus jannaschii (strain ATCC 43067 / DSM 2661 / JAL-1 / JCM 10045 / NBRC 100440) (Methanococcus jannaschii).